Reading from the N-terminus, the 119-residue chain is Large ribosomal subunit protein uL14m (119 aa).

It belongs to the universal ribosomal protein uL14 family.

The protein resides in the mitochondrion. The protein is Large ribosomal subunit protein uL14m of Tetrahymena pyriformis.